A 290-amino-acid polypeptide reads, in one-letter code: Secreted chorismate mutase (290 aa).

Positions 1-21 (MKLSVSIFVLLAVSAFGGGSA) are cleaved as a signal peptide. The interval 117 to 140 (VVLSRDTVLDKPVVGKGIFPIGRR) is KWL1-binding extensive loop region (ELR). Asn159 and Asn208 each carry an N-linked (GlcNAc...) asparagine glycan.

In terms of assembly, homodimer. Forms a heterodimer with the host cytosolic chorismate mutase CM2. Interacts with the host kiwellin KWL1 which acts as a defense protein that protects maize from infection.

Its subcellular location is the secreted. It is found in the host cytoplasm. The protein localises to the host cytosol. The enzyme catalyses chorismate = prephenate. With respect to regulation, contrary to classical chorismate mutases, CMU1 is not subject to allosteric regulation by tryptophan and tyrosine. Activity is decreased in a non-competitive and allosteric manner by the binding of the host defense kiwellin KWL1 which probably blocks substrate access to the active site of CMU1. Secreted chorismate mutase that is one component of a cocktail of effectors shaping the host metabolome and acting as virulence factors. The enzyme is taken up by plant cells, can spread to neighboring cells where it affects the biosynthesis of the plant immune signal salicylic acid by channelling chorismate into the phenylpropanoid pathway. Interferes with the activity of host cytosolic chorismate mutase CM2 through heterodimerization. The protein is Secreted chorismate mutase (CMU1) of Mycosarcoma maydis (Corn smut fungus).